The sequence spans 299 residues: Ribosomal RNA small subunit methyltransferase H (299 aa).

Residues 45-47 (GGH), Asp-64, Phe-92, Asp-108, and Gln-115 contribute to the S-adenosyl-L-methionine site. Positions 275 to 299 (PQSDEQAKNPRSRSAKLRLAQRKEQ) are disordered. The span at 284–299 (PRSRSAKLRLAQRKEQ) shows a compositional bias: basic residues.

It belongs to the methyltransferase superfamily. RsmH family.

It is found in the cytoplasm. The catalysed reaction is cytidine(1402) in 16S rRNA + S-adenosyl-L-methionine = N(4)-methylcytidine(1402) in 16S rRNA + S-adenosyl-L-homocysteine + H(+). Specifically methylates the N4 position of cytidine in position 1402 (C1402) of 16S rRNA. The chain is Ribosomal RNA small subunit methyltransferase H from Gloeothece citriformis (strain PCC 7424) (Cyanothece sp. (strain PCC 7424)).